Consider the following 282-residue polypeptide: MENFWSIVVFFLLSILFILYNISTVCHYYMRISFYYFTILLHGMEVCVTMIPSWLNGKGADYVFHSFFYWCKWTGVHTTVYGYEKTQVEGPAVVICNHQSSLDILSMASIWPKNCVVMMKRILAYVPFFNLGAYFSNTIFIDRYNRERAMASVDYCASEMKNRNLKLWVFPEGTRNREGGFIPFKKGAFNIAVRAQIPIIPVVFSDYRDFYSKPGRYFKNDGEVVIRVLDAIPTKGLTLDDVSELSDMCRDVMLAAYKEVTLEAQQRNATRRGETKDGKKSE.

2 helical membrane-spanning segments follow: residues 4–24 (FWSI…NIST) and 32–52 (ISFY…TMIP). An HXXXXD motif motif is present at residues 98–103 (HQSSLD). Residues 122 to 142 (ILAYVPFFNLGAYFSNTIFID) form a helical membrane-spanning segment.

This sequence belongs to the 1-acyl-sn-glycerol-3-phosphate acyltransferase family.

Its subcellular location is the membrane. It carries out the reaction a 1-acyl-sn-glycero-3-phosphate + an acyl-CoA = a 1,2-diacyl-sn-glycero-3-phosphate + CoA. Its pathway is phospholipid metabolism; CDP-diacylglycerol biosynthesis; CDP-diacylglycerol from sn-glycerol 3-phosphate: step 2/3. Functionally, converts lysophosphatidic acid (LPA) into phosphatidic acid by incorporating an acyl moiety at the sn-2 position of the glycerol backbone. This Caenorhabditis elegans protein is Putative 1-acyl-sn-glycerol-3-phosphate acyltransferase acl-2 (acl-2).